Here is a 1066-residue protein sequence, read N- to C-terminus: Vinculin (1066 aa).

The N-terminal globular head stretch occupies residues 1 to 835; the sequence is MPVFHTRTIE…GAVAKVREAF (835 aa). The residue at position 97 (Ser-97) is a Phosphoserine. Residues 168–208 form a talin-interaction region; that stretch reads MTKMAKMIDERQQELTHQEHRVMLVNSMNTVKELLPVLISA. Lys-173 carries the post-translational modification N6-acetyllysine. Tandem repeats lie at residues 259–369, 370–479, and 480–589. Positions 259 to 589 are 3 X 112 AA tandem repeats; that stretch reads ASKDTEAMKR…LKDLKTQMQE (331 aa). 6 positions are modified to phosphoserine: Ser-260, Ser-272, Ser-275, Ser-290, Ser-346, and Ser-434. Lys-496 carries the N6-acetyllysine modification. A Phosphotyrosine modification is found at Tyr-537. 3 positions are modified to phosphoserine: Ser-574, Ser-579, and Ser-600. Thr-604 and Thr-672 each carry phosphothreonine. Ser-721 is modified (phosphoserine). The interaction with ACTN4 stretch occupies residues 741–764; that stretch reads MANIQPQMLVAGATSIARRANRIL. A phosphoserine mark is found at Ser-795 and Ser-809. Position 822 is a phosphotyrosine (Tyr-822). The segment at 836–878 is linker (Pro-rich); that stretch reads QPQEPDFPPPPPDLEQLRLTDELAPPKPPLPEGEVPPPRPPPP. The tract at residues 857-887 is disordered; the sequence is ELAPPKPPLPEGEVPPPRPPPPEEKDEEFPE. Residues 860–876 show a composition bias toward pro residues; it reads PPKPPLPEGEVPPPRPP. The tract at residues 879–1066 is C-terminal tail; sequence EEKDEEFPEQ…RWVRKTPWYQ (188 aa). 2 facilitates phospholipid membrane insertion regions span residues 935–978 and 1052–1066; these read RLVR…KRIR and AGFT…PWYQ. Position 1065 is a phosphotyrosine; by SRC-type Tyr-kinases (Tyr-1065).

The protein belongs to the vinculin/alpha-catenin family. Exhibits self-association properties. Part of a complex composed of THSD1, PTK2/FAK1, TLN1 and VCL. Interacts with APBB1IP, NRAP and TLN1. Interacts with CTNNB1 and this interaction is necessary for its localization to the cell-cell junctions and for its function in regulating cell surface expression of E-cadherin. Interacts with SORBS1. Interacts with SYNM. Interacts with CTNNA1. Binds to ACTN4; this interaction triggers conformational changes. Interacts with FLII. Phosphorylated; on serines, threonines and tyrosines. Phosphorylation on Tyr-1065 in activated platelets affects head-tail interactions and cell spreading but has no effect on actin binding nor on localization to focal adhesion plaques. In terms of processing, acetylated; mainly by myristic acid but also by a small amount of palmitic acid.

The protein resides in the cell membrane. It is found in the cell junction. The protein localises to the adherens junction. It localises to the focal adhesion. Its subcellular location is the cytoplasm. The protein resides in the cytoskeleton. It is found in the sarcolemma. The protein localises to the cell projection. It localises to the podosome. In terms of biological role, actin filament (F-actin)-binding protein involved in cell-matrix adhesion and cell-cell adhesion. Regulates cell-surface E-cadherin expression and potentiates mechanosensing by the E-cadherin complex. May also play important roles in cell morphology and locomotion. The protein is Vinculin of Rattus norvegicus (Rat).